The chain runs to 350 residues: MGCFFSKRRKADKESRPENEEERPKQYSWDQREKVDPKDYMFSGLKDETVGRLPGTVAGQQFLIQDCENCNIYIFDHSATVTIDDCTNCIIFLGPVKGSVFFRNCRDCKCTLACQQFRVRDCRKLEVFLCCATQPIIESSSNIKFGCFQWYYPELAFQFKDAGLSIFNNTWSNIHDFTPVSGELNWSLLPEDAVVQDYVPIPTTEELKAVRVSTEANRSIVPISRGQRQKSSDESCLVVLFAGDYTIANARKLIDEMVGKGFFLVQTKEVSMKAEDAQRVFREKAPDFLPLLNKGPVIALEFNGDGAVEVCQLIVNEIFNGTKMFVSESKETASGDVDSFYNFADIQMGI.

The span at 1-10 (MGCFFSKRRK) shows a compositional bias: basic residues. The interval 1–31 (MGCFFSKRRKADKESRPENEEERPKQYSWDQ) is disordered. Glycine 2 carries N-myristoyl glycine lipidation. Cysteine 3 carries S-palmitoyl cysteine lipidation. Over residues 11 to 31 (ADKESRPENEEERPKQYSWDQ) the composition is skewed to basic and acidic residues. Positions 24-179 (PKQYSWDQRE…TWSNIHDFTP (156 aa)) constitute a C-CAP/cofactor C-like domain. GTP contacts are provided by residues 98–99 (GS) and 115–118 (QQFR).

This sequence belongs to the TBCC family. In terms of assembly, found in a complex with ARL3, RP2 and UNC119 (or UNC119B); RP2 induces hydrolysis of GTP ARL3 in the complex, leading to the release of UNC119 (or UNC119B). Interacts with ARL3; interaction is direct and stimulated with the activated GTP-bound form of ARL3. In terms of processing, myristoylated on Gly-2; which may be required for membrane targeting. Palmitoylated on Cys-3; which may be required for plasma membrane targeting. Mutation of Cys-3 targets the protein to internal membranes. In terms of tissue distribution, ubiquitous. Expressed in the rod and cone photoreceptors, extending from the tips of the outer segment (OS) through the inner segment (IS) and outer nuclear layer (ONL) and into the synaptic terminals of the outer plexiform layer (ONL). Also detected in the bipolar, horizontal and amacrine cells in the inner nuclear layer (INL), extending to the inner plexiform layer (IPL) and though the ganglion cell layer (GCL) and into the nerve fiber layer (NFL) (at protein level).

It localises to the cell membrane. It is found in the cell projection. The protein resides in the cilium. Its function is as follows. Acts as a GTPase-activating protein (GAP) involved in trafficking between the Golgi and the ciliary membrane. Involved in localization of proteins, such as NPHP3, to the cilium membrane by inducing hydrolysis of GTP ARL3, leading to the release of UNC119 (or UNC119B). Acts as a GTPase-activating protein (GAP) for tubulin in concert with tubulin-specific chaperone C, but does not enhance tubulin heterodimerization. Acts as a guanine nucleotide dissociation inhibitor towards ADP-ribosylation factor-like proteins. This chain is Protein XRP2 (RP2), found in Homo sapiens (Human).